The chain runs to 516 residues: Glucose-6-phosphate 1-dehydrogenase 5, cytoplasmic (516 aa).

NADP(+) is bound by residues 38 to 45 (GASGDLAK), R73, Y156, and K183. Residues K183, 213–217 (HYLGK), E251, and D270 contribute to the D-glucose 6-phosphate site. H275 acts as the Proton acceptor in catalysis. Residue K358 participates in NADP(+) binding. Positions 361 and 366 each coordinate D-glucose 6-phosphate. Residues K367, R371, and R395 each contribute to the NADP(+) site. Q397 lines the D-glucose 6-phosphate pocket. NADP(+) is bound by residues 403–405 (YMK), 423–425 (DLS), R489, and W511.

This sequence belongs to the glucose-6-phosphate dehydrogenase family. In terms of assembly, forms homodimer. In terms of tissue distribution, expressed in leaves and stems.

The protein localises to the cytoplasm. The protein resides in the cytosol. It carries out the reaction D-glucose 6-phosphate + NADP(+) = 6-phospho-D-glucono-1,5-lactone + NADPH + H(+). Its pathway is carbohydrate degradation; pentose phosphate pathway; D-ribulose 5-phosphate from D-glucose 6-phosphate (oxidative stage): step 1/3. Its activity is regulated as follows. Regulated by metabolites. In terms of biological role, catalyzes the rate-limiting step of the oxidative pentose-phosphate pathway, which represents a route for the dissimilation of carbohydrates besides glycolysis. The main function of this enzyme is to provide reducing power (NADPH) and pentose phosphates for fatty acid and nucleic acid synthesis which are involved in membrane synthesis and cell division. The protein is Glucose-6-phosphate 1-dehydrogenase 5, cytoplasmic of Arabidopsis thaliana (Mouse-ear cress).